The sequence spans 80 residues: Acyl carrier protein (80 aa).

Residues 2 to 77 (SEINQKVVDI…QVVEYLEKRL (76 aa)) enclose the Carrier domain. At Ser-37 the chain carries O-(pantetheine 4'-phosphoryl)serine.

This sequence belongs to the acyl carrier protein (ACP) family. Post-translationally, 4'-phosphopantetheine is transferred from CoA to a specific serine of apo-ACP by AcpS. This modification is essential for activity because fatty acids are bound in thioester linkage to the sulfhydryl of the prosthetic group.

It is found in the cytoplasm. It participates in lipid metabolism; fatty acid biosynthesis. Functionally, carrier of the growing fatty acid chain in fatty acid biosynthesis. The chain is Acyl carrier protein from Amoebophilus asiaticus (strain 5a2).